Consider the following 578-residue polypeptide: MSISRRSYEQFDEMKSENQENNSKKKSSERLKKLDPDKFVEAYGAYGKYQIFTYVLVQTLNFFYSSSMYIMSFVQLNLEKQCEYKNETIPISETCQIETESSKAFGNLNGEYCGIAENTLVNVTNQKASTNLLVDFDLSCSHWFFQEFGLTIFTIGAVIAVPFMSMLADRYGRKPIIVTTAILAFLANMAASFSPNFAIFLILRAFIGACSDSYLSVASVATCEYLSEKARAWITVVYNVAWSLGMVWTLLVTLMTDDWRWRYFIVSLPGVYGFALWYFLPESPHWLITKNKTEKLKKYIKTANRVNNVSPEFNDCQQSSHHEEKHESFKALLGSKKLIWLLFANGFIEMVISLVYFAISFMSVELGGDQVQAFLYSSLIEIPAGLAVIPLMMKMGRKMIVIWCLVFQTLALIGVTVFLDSYEFKLVIMLVAKVMATIIYSVHPIWATEQFPTSVRSLCFSLMNIPQSMGIIMSPYVKHIVMSPNWIPFVVIALFSFISATLAFMLHETKNKKLPTDIESLSYPSETNDLSAYRRSKSSSSSVSALSKTSVRSKKTLSSESVSKKLDTVNFSDKEYRI.

Residues 1 to 30 (MSISRRSYEQFDEMKSENQENNSKKKSSER) are disordered. 11 helical membrane passes run 51-71 (IFTY…MYIM), 148-168 (FGLT…SMLA), 182-202 (ILAF…IFLI), 232-252 (AWIT…TLLV), 263-283 (YFIV…LPES), 339-359 (IWLL…YFAI), 373-393 (AFLY…PLMM), 399-419 (MIVI…TVFL), 426-446 (LVIM…HPIW), 457-477 (SLCF…SPYV), and 486-506 (WIPF…AFML). The segment covering 532-550 (AYRRSKSSSSSVSALSKTS) has biased composition (low complexity). The interval 532 to 561 (AYRRSKSSSSSVSALSKTSVRSKKTLSSES) is disordered.

Belongs to the major facilitator superfamily. Sugar transporter (TC 2.A.1.1) family.

The protein resides in the membrane. The protein is Putative transporter B0361.11 of Caenorhabditis elegans.